We begin with the raw amino-acid sequence, 166 residues long: NAD(P)H-quinone oxidoreductase subunit I, chloroplastic (166 aa).

4Fe-4S ferredoxin-type domains follow at residues glycine 55–lysine 84 and leucine 95–glutamate 124. Cysteine 64, cysteine 67, cysteine 70, cysteine 74, cysteine 104, cysteine 107, cysteine 110, and cysteine 114 together coordinate [4Fe-4S] cluster.

The protein belongs to the complex I 23 kDa subunit family. NDH is composed of at least 16 different subunits, 5 of which are encoded in the nucleus. Requires [4Fe-4S] cluster as cofactor.

Its subcellular location is the plastid. It localises to the chloroplast thylakoid membrane. The catalysed reaction is a plastoquinone + NADH + (n+1) H(+)(in) = a plastoquinol + NAD(+) + n H(+)(out). It carries out the reaction a plastoquinone + NADPH + (n+1) H(+)(in) = a plastoquinol + NADP(+) + n H(+)(out). In terms of biological role, NDH shuttles electrons from NAD(P)H:plastoquinone, via FMN and iron-sulfur (Fe-S) centers, to quinones in the photosynthetic chain and possibly in a chloroplast respiratory chain. The immediate electron acceptor for the enzyme in this species is believed to be plastoquinone. Couples the redox reaction to proton translocation, and thus conserves the redox energy in a proton gradient. This is NAD(P)H-quinone oxidoreductase subunit I, chloroplastic from Oblivia mikanioides (Salmea mikanioides).